Consider the following 37-residue polypeptide: Rugosin-C (37 aa).

A disulfide bridge connects residues C31 and C37.

Belongs to the frog skin active peptide (FSAP) family. Brevinin subfamily. Expressed by the skin glands.

The protein localises to the secreted. Has antibacterial activity against Gram-positive bacteria. In Glandirana rugosa (Japanese wrinkled frog), this protein is Rugosin-C.